We begin with the raw amino-acid sequence, 333 residues long: Acetyltransferase Pat (333 aa).

Residues 85-88 (GEIA), 95-96 (RT), and arginine 135 each bind 3',5'-cyclic AMP. Residues 153–317 (FYLRPVLPGD…DTVPFEPELI (165 aa)) enclose the N-acetyltransferase domain. Glutamate 211 contacts Mg(2+). Substrate is bound by residues 237-239 (FTV), 245-250 (GRGIGS), asparagine 276, and arginine 285.

Homodimer. Mg(2+) is required as a cofactor.

With respect to regulation, allosterically regulated by cAMP. In terms of biological role, catalyzes specifically the acetylation of the epsilon-amino group of a highly conserved lysine residue in acetyl-CoA synthetase (ACS) and of the universal stress protein (USP) MSMEG_4207. Acetylation results in the inactivation of ACS activity and could be important for mycobacteria to adjust to environmental changes. The polypeptide is Acetyltransferase Pat (Mycolicibacterium smegmatis (strain ATCC 700084 / mc(2)155) (Mycobacterium smegmatis)).